Here is a 334-residue protein sequence, read N- to C-terminus: tRNA N6-adenosine threonylcarbamoyltransferase (334 aa).

Fe cation-binding residues include histidine 112 and histidine 116. Residues 135–139, aspartate 168, glycine 181, aspartate 185, and asparagine 274 contribute to the substrate site; that span reads VVSGG. Aspartate 303 serves as a coordination point for Fe cation.

This sequence belongs to the KAE1 / TsaD family. Fe(2+) serves as cofactor.

The protein localises to the cytoplasm. It catalyses the reaction L-threonylcarbamoyladenylate + adenosine(37) in tRNA = N(6)-L-threonylcarbamoyladenosine(37) in tRNA + AMP + H(+). In terms of biological role, required for the formation of a threonylcarbamoyl group on adenosine at position 37 (t(6)A37) in tRNAs that read codons beginning with adenine. Is involved in the transfer of the threonylcarbamoyl moiety of threonylcarbamoyl-AMP (TC-AMP) to the N6 group of A37, together with TsaE and TsaB. TsaD likely plays a direct catalytic role in this reaction. In Anaeromyxobacter dehalogenans (strain 2CP-C), this protein is tRNA N6-adenosine threonylcarbamoyltransferase.